We begin with the raw amino-acid sequence, 279 residues long: Tryptophan synthase alpha chain (279 aa).

Residues Glu50 and Asp61 each act as proton acceptor in the active site.

This sequence belongs to the TrpA family. Tetramer of two alpha and two beta chains.

It carries out the reaction (1S,2R)-1-C-(indol-3-yl)glycerol 3-phosphate + L-serine = D-glyceraldehyde 3-phosphate + L-tryptophan + H2O. It participates in amino-acid biosynthesis; L-tryptophan biosynthesis; L-tryptophan from chorismate: step 5/5. In terms of biological role, the alpha subunit is responsible for the aldol cleavage of indoleglycerol phosphate to indole and glyceraldehyde 3-phosphate. The protein is Tryptophan synthase alpha chain of Brucella anthropi (strain ATCC 49188 / DSM 6882 / CCUG 24695 / JCM 21032 / LMG 3331 / NBRC 15819 / NCTC 12168 / Alc 37) (Ochrobactrum anthropi).